Here is a 112-residue protein sequence, read N- to C-terminus: DNA-binding protein Bv3F (112 aa).

The segment at 65–92 is disordered; that stretch reads KRNSKRMSTVPKYRDPATGKTWSGRGRQ. 2 DNA-binding regions span residues 89–94 and 89–95; these read RGRQPA and RGRQPAW.

Belongs to the histone-like protein H-NS family. In terms of assembly, homodimer that oligomerizes on DNA into higher-order complexes that form bridges between disparate regions of DNA compacting it.

The protein resides in the cytoplasm. The protein localises to the nucleoid. A DNA-binding protein implicated in transcriptional repression and chromosome organization and compaction. Binds in the minor groove of AT-rich DNA. Binds nucleation sites in AT-rich DNA and bridges them, forming higher-order nucleoprotein complexes and condensing the chromosome. As many horizontally transferred genes are AT-rich, it plays a central role in silencing foreign genes. The protein is DNA-binding protein Bv3F of Burkholderia vietnamiensis (strain G4 / LMG 22486) (Burkholderia cepacia (strain R1808)).